We begin with the raw amino-acid sequence, 151 residues long: UPF0098 protein MTH_273 (151 aa).

Belongs to the UPF0098 family.

The sequence is that of UPF0098 protein MTH_273 from Methanothermobacter thermautotrophicus (strain ATCC 29096 / DSM 1053 / JCM 10044 / NBRC 100330 / Delta H) (Methanobacterium thermoautotrophicum).